The chain runs to 400 residues: Acetyl-CoA decarbonylase/synthase complex subunit delta (400 aa).

This sequence belongs to the CdhD family. In terms of assembly, heterodimer of delta and gamma chains. The ACDS complex is made up of alpha, epsilon, beta, gamma and delta chains with a probable stoichiometry of (alpha(2)epsilon(2))(4)-beta(8)-(gamma(1)delta(1))(8).

In terms of biological role, part of a complex that catalyzes the reversible cleavage of acetyl-CoA, allowing autotrophic growth from CO(2). Probably maintains the overall quaternary structure of the ACDS complex. The protein is Acetyl-CoA decarbonylase/synthase complex subunit delta of Methanopyrus kandleri (strain AV19 / DSM 6324 / JCM 9639 / NBRC 100938).